The chain runs to 237 residues: Protein GrpE (237 aa).

2 disordered regions span residues 24–56 and 204–237; these read LILE…KQLQ and SAGS…PQPS.

It belongs to the GrpE family. Homodimer.

Its subcellular location is the cytoplasm. Participates actively in the response to hyperosmotic and heat shock by preventing the aggregation of stress-denatured proteins, in association with DnaK and GrpE. It is the nucleotide exchange factor for DnaK and may function as a thermosensor. Unfolded proteins bind initially to DnaJ; upon interaction with the DnaJ-bound protein, DnaK hydrolyzes its bound ATP, resulting in the formation of a stable complex. GrpE releases ADP from DnaK; ATP binding to DnaK triggers the release of the substrate protein, thus completing the reaction cycle. Several rounds of ATP-dependent interactions between DnaJ, DnaK and GrpE are required for fully efficient folding. The chain is Protein GrpE from Synechococcus sp. (strain JA-2-3B'a(2-13)) (Cyanobacteria bacterium Yellowstone B-Prime).